The chain runs to 200 residues: Small ribosomal subunit protein uS4 (200 aa).

The tract at residues 22 to 43 (TGKELQKRPYPPGQHGPSQRRK) is disordered. In terms of domain architecture, S4 RNA-binding spans 92–152 (SRLDNLVYRL…EKSRNLQVIK (61 aa)).

It belongs to the universal ribosomal protein uS4 family. Part of the 30S ribosomal subunit. Contacts protein S5. The interaction surface between S4 and S5 is involved in control of translational fidelity.

Its function is as follows. One of the primary rRNA binding proteins, it binds directly to 16S rRNA where it nucleates assembly of the body of the 30S subunit. In terms of biological role, with S5 and S12 plays an important role in translational accuracy. This Geobacillus sp. (strain WCH70) protein is Small ribosomal subunit protein uS4.